The following is a 95-amino-acid chain: Acylphosphatase (95 aa).

One can recognise an Acylphosphatase-like domain in the interval 7 to 95 (RLTAWVLGTV…PKGEVGFRTR (89 aa)). Residues R22 and N40 contribute to the active site.

The protein belongs to the acylphosphatase family.

The enzyme catalyses an acyl phosphate + H2O = a carboxylate + phosphate + H(+). This chain is Acylphosphatase (acyP), found in Corynebacterium diphtheriae (strain ATCC 700971 / NCTC 13129 / Biotype gravis).